The chain runs to 61 residues: Metallothionein (61 aa).

An N-acetylmethionine modification is found at methionine 1. The segment at methionine 1–cysteine 29 is beta. Residues cysteine 5, cysteine 7, cysteine 13, cysteine 15, cysteine 19, cysteine 21, cysteine 24, cysteine 26, cysteine 29, cysteine 33, cysteine 34, cysteine 36, cysteine 37, cysteine 41, cysteine 44, cysteine 48, cysteine 50, cysteine 57, cysteine 59, and cysteine 60 each coordinate a divalent metal cation. The alpha stretch occupies residues lysine 30 to alanine 61.

Belongs to the metallothionein superfamily. Type 1 family. As to quaternary structure, monomer.

In terms of biological role, metallothioneins have a high content of cysteine residues that bind various heavy metals. The polypeptide is Metallothionein (Balaena mysticetus (Bowhead whale)).